We begin with the raw amino-acid sequence, 62 residues long: Phylloseptin-Az7 (62 aa).

The first 19 residues, 1 to 19 (LKKSLFLVLFLGLVSLSIC), serve as a signal peptide directing secretion. Residues 20-40 (EEEKRETEEKENEQEDDKSEE) constitute a propeptide that is removed on maturation. Phenylalanine 61 is modified (phenylalanine amide).

Belongs to the frog skin active peptide (FSAP) family. Phylloseptin subfamily. Expressed by the skin glands.

The protein resides in the secreted. Its function is as follows. Has antimicrobial activity. This Pithecopus azureus (Orange-legged monkey tree frog) protein is Phylloseptin-Az7 (psn15).